A 122-amino-acid chain; its full sequence is UPF0145 protein BamMC406_5002 (122 aa).

The protein belongs to the UPF0145 family.

The polypeptide is UPF0145 protein BamMC406_5002 (Burkholderia ambifaria (strain MC40-6)).